The sequence spans 305 residues: Ribosomal RNA small subunit methyltransferase H (305 aa).

S-adenosyl-L-methionine-binding positions include 33-35 (GGH), aspartate 52, aspartate 97, and glutamine 104.

Belongs to the methyltransferase superfamily. RsmH family.

Its subcellular location is the cytoplasm. The enzyme catalyses cytidine(1402) in 16S rRNA + S-adenosyl-L-methionine = N(4)-methylcytidine(1402) in 16S rRNA + S-adenosyl-L-homocysteine + H(+). Functionally, specifically methylates the N4 position of cytidine in position 1402 (C1402) of 16S rRNA. The chain is Ribosomal RNA small subunit methyltransferase H from Campylobacter lari (strain RM2100 / D67 / ATCC BAA-1060).